Reading from the N-terminus, the 171-residue chain is Crossover junction endodeoxyribonuclease RuvC (171 aa).

Active-site residues include aspartate 11, glutamate 71, and aspartate 143. Aspartate 11, glutamate 71, and aspartate 143 together coordinate Mg(2+).

It belongs to the RuvC family. In terms of assembly, homodimer which binds Holliday junction (HJ) DNA. The HJ becomes 2-fold symmetrical on binding to RuvC with unstacked arms; it has a different conformation from HJ DNA in complex with RuvA. In the full resolvosome a probable DNA-RuvA(4)-RuvB(12)-RuvC(2) complex forms which resolves the HJ. It depends on Mg(2+) as a cofactor.

It localises to the cytoplasm. It carries out the reaction Endonucleolytic cleavage at a junction such as a reciprocal single-stranded crossover between two homologous DNA duplexes (Holliday junction).. In terms of biological role, the RuvA-RuvB-RuvC complex processes Holliday junction (HJ) DNA during genetic recombination and DNA repair. Endonuclease that resolves HJ intermediates. Cleaves cruciform DNA by making single-stranded nicks across the HJ at symmetrical positions within the homologous arms, yielding a 5'-phosphate and a 3'-hydroxyl group; requires a central core of homology in the junction. The consensus cleavage sequence is 5'-(A/T)TT(C/G)-3'. Cleavage occurs on the 3'-side of the TT dinucleotide at the point of strand exchange. HJ branch migration catalyzed by RuvA-RuvB allows RuvC to scan DNA until it finds its consensus sequence, where it cleaves and resolves the cruciform DNA. This Chelativorans sp. (strain BNC1) protein is Crossover junction endodeoxyribonuclease RuvC.